Reading from the N-terminus, the 87-residue chain is Small ribosomal subunit protein bS20 (87 aa).

The interval methionine 1–asparagine 21 is disordered.

This sequence belongs to the bacterial ribosomal protein bS20 family.

Functionally, binds directly to 16S ribosomal RNA. The chain is Small ribosomal subunit protein bS20 from Campylobacter jejuni subsp. jejuni serotype O:23/36 (strain 81-176).